A 292-amino-acid polypeptide reads, in one-letter code: Protein/nucleic acid deglycase HchA (292 aa).

A compositionally biased stretch (polar residues) spans 1–12 (MSQDVNELSKQP). A disordered region spans residues 1-23 (MSQDVNELSKQPTPDKAEDNAFF). The active-site Nucleophile is Cys-190.

It belongs to the peptidase C56 family. HchA subfamily.

The protein resides in the cytoplasm. It catalyses the reaction N(omega)-(1-hydroxy-2-oxopropyl)-L-arginyl-[protein] + H2O = lactate + L-arginyl-[protein] + H(+). It carries out the reaction N(6)-(1-hydroxy-2-oxopropyl)-L-lysyl-[protein] + H2O = lactate + L-lysyl-[protein] + H(+). The catalysed reaction is S-(1-hydroxy-2-oxopropyl)-L-cysteinyl-[protein] + H2O = lactate + L-cysteinyl-[protein] + H(+). The enzyme catalyses N(omega)-(1-hydroxy-2-oxoethyl)-L-arginyl-[protein] + H2O = L-arginyl-[protein] + glycolate + H(+). It catalyses the reaction N(6)-(1-hydroxy-2-oxoethyl)-L-lysyl-[protein] + H2O = glycolate + L-lysyl-[protein] + H(+). It carries out the reaction S-(1-hydroxy-2-oxoethyl)-L-cysteinyl-[protein] + H2O = glycolate + L-cysteinyl-[protein] + H(+). The catalysed reaction is N(2)-(1-hydroxy-2-oxopropyl)-dGTP + H2O = lactate + dGTP + H(+). The enzyme catalyses N(2)-(1-hydroxy-2-oxopropyl)-GTP + H2O = lactate + GTP + H(+). It catalyses the reaction N(2)-(1-hydroxy-2-oxopropyl)-GDP + H2O = lactate + GDP + H(+). It carries out the reaction N(2)-(1-hydroxy-2-oxopropyl)-GMP + H2O = lactate + GMP + H(+). The catalysed reaction is N(2)-(1-hydroxy-2-oxoethyl)-dGTP + H2O = dGTP + glycolate + H(+). The enzyme catalyses N(2)-(1-hydroxy-2-oxoethyl)-GTP + H2O = glycolate + GTP + H(+). It catalyses the reaction N(2)-(1-hydroxy-2-oxoethyl)-GDP + H2O = glycolate + GDP + H(+). It carries out the reaction N(2)-(1-hydroxy-2-oxoethyl)-GMP + H2O = glycolate + GMP + H(+). The catalysed reaction is an N(2)-(1-hydroxy-2-oxopropyl)-guanosine in RNA + H2O = a guanosine in RNA + lactate + H(+). The enzyme catalyses an N(2)-(1-hydroxy-2-oxopropyl)-2'-deoxyguanosine in DNA + H2O = a 2'-deoxyguanosine in DNA + lactate + H(+). It catalyses the reaction an N(2)-(1-hydroxy-2-oxoethyl)-guanosine in RNA + H2O = a guanosine in RNA + glycolate + H(+). It carries out the reaction an N(2)-(1-hydroxy-2-oxoethyl)-2'-deoxyguanosine in DNA + H2O = a 2'-deoxyguanosine in DNA + glycolate + H(+). Protein and nucleotide deglycase that catalyzes the deglycation of the Maillard adducts formed between amino groups of proteins or nucleotides and reactive carbonyl groups of glyoxals. Thus, functions as a protein deglycase that repairs methylglyoxal- and glyoxal-glycated proteins, and releases repaired proteins and lactate or glycolate, respectively. Deglycates cysteine, arginine and lysine residues in proteins, and thus reactivates these proteins by reversing glycation by glyoxals. Acts on early glycation intermediates (hemithioacetals and aminocarbinols), preventing the formation of Schiff bases and advanced glycation endproducts (AGE). Also functions as a nucleotide deglycase able to repair glycated guanine in the free nucleotide pool (GTP, GDP, GMP, dGTP) and in DNA and RNA. Is thus involved in a major nucleotide repair system named guanine glycation repair (GG repair), dedicated to reversing methylglyoxal and glyoxal damage via nucleotide sanitization and direct nucleic acid repair. Plays an important role in protecting cells from carbonyl stress. This is Protein/nucleic acid deglycase HchA from Staphylococcus aureus (strain bovine RF122 / ET3-1).